The sequence spans 205 residues: Cytochrome c oxidase subunit 3 (205 aa).

A run of 5 helical transmembrane segments spans residues 28–48, 72–92, 104–124, 142–162, and 184–204; these read GTIV…AMYF, ALVI…GVFA, WFSL…YEYF, FFIT…AFVV, and SYYW…IYFI.

It belongs to the cytochrome c oxidase subunit 3 family. In terms of assembly, associates with subunits I, II and IV to form cytochrome c oxidase.

It localises to the cell membrane. The enzyme catalyses 4 Fe(II)-[cytochrome c] + O2 + 8 H(+)(in) = 4 Fe(III)-[cytochrome c] + 2 H2O + 4 H(+)(out). This Corynebacterium diphtheriae (strain ATCC 700971 / NCTC 13129 / Biotype gravis) protein is Cytochrome c oxidase subunit 3 (ctaE).